A 490-amino-acid polypeptide reads, in one-letter code: Betaine aldehyde dehydrogenase (490 aa).

K(+)-binding residues include Thr26, Ile27, and Asp93. Gly150–Trp152 is an NAD(+) binding site. The active-site Charge relay system is the Lys162. Position 176–179 (Lys176–Glu179) interacts with NAD(+). Val180 lines the K(+) pocket. Gly230–Thr233 is an NAD(+) binding site. A K(+)-binding site is contributed by Leu246. Residue Glu252 is the Proton acceptor of the active site. 3 residues coordinate NAD(+): Gly254, Cys286, and Glu387. The Nucleophile role is filled by Cys286. The residue at position 286 (Cys286) is a Cysteine sulfenic acid (-SOH). 2 residues coordinate K(+): Lys457 and Gly460. Catalysis depends on Glu464, which acts as the Charge relay system.

The protein belongs to the aldehyde dehydrogenase family. In terms of assembly, dimer of dimers. It depends on K(+) as a cofactor.

It catalyses the reaction betaine aldehyde + NAD(+) + H2O = glycine betaine + NADH + 2 H(+). Its pathway is amine and polyamine biosynthesis; betaine biosynthesis via choline pathway; betaine from betaine aldehyde: step 1/1. Its function is as follows. Involved in the biosynthesis of the osmoprotectant glycine betaine. Catalyzes the irreversible oxidation of betaine aldehyde to the corresponding acid. The protein is Betaine aldehyde dehydrogenase of Pseudomonas paraeruginosa (strain DSM 24068 / PA7) (Pseudomonas aeruginosa (strain PA7)).